We begin with the raw amino-acid sequence, 583 residues long: Zinc finger protein 277 (583 aa).

C2H2-type zinc fingers lie at residues 351-375 and 482-508; these read LQCL…KKQH and HQCK…DTKH.

The protein belongs to the ZNF277 family. In terms of assembly, interacts (via zinc-finger domains) with RPS2/40S ribosomal protein S2, perhaps as nascent RPS2 is synthesized during translation; the interaction is direct; the interaction is extra-ribosomal. Interaction with RPS2 competes with the binding of RPS2 to protein arginine methyltransferase PRMT3. Interacts with Polycomb group (PcG) complex protein BMI1. May be part of a complex including at least ZNF277, BMI1 and RNF2/RING2.

The protein localises to the nucleus. It is found in the cytoplasm. Its subcellular location is the nucleolus. It localises to the chromosome. Probable transcription factor. Involved in modulation of cellular senescence; represses transcription of the tumor suppressor gene INK4A/ARF, perhaps acting via the Polycomb group (PcG) complex PRC1. The protein is Zinc finger protein 277 of Mus musculus (Mouse).